We begin with the raw amino-acid sequence, 411 residues long: Secretion apparatus protein BsaZ (411 aa).

4 consecutive transmembrane segments (helical) span residues isoleucine 28–threonine 48, isoleucine 80–serine 100, alanine 137–alanine 157, and isoleucine 175–leucine 195. Residues alanine 341 to alanine 411 form a disordered region. Over residues aspartate 370 to alanine 404 the composition is skewed to low complexity.

Belongs to the type III secretion exporter family.

It localises to the cell membrane. Functionally, part of the bsa type III secretion system, is involved in the intracellular replication of invading bacteria inside the host cell. Probably necessary for the lysis of the vacuole membrane and escape into the host cell cytoplasm. In Burkholderia pseudomallei (strain 1026b), this protein is Secretion apparatus protein BsaZ (bsaZ).